The chain runs to 130 residues: Glycine cleavage system H protein (130 aa).

In terms of domain architecture, Lipoyl-binding spans 24–106 (SVTVGITEHA…YGDGWIMRIQ (83 aa)). Residue Lys65 is modified to N6-lipoyllysine.

It belongs to the GcvH family. As to quaternary structure, the glycine cleavage system is composed of four proteins: P, T, L and H. (R)-lipoate serves as cofactor.

The glycine cleavage system catalyzes the degradation of glycine. The H protein shuttles the methylamine group of glycine from the P protein to the T protein. The polypeptide is Glycine cleavage system H protein (Halorhodospira halophila (strain DSM 244 / SL1) (Ectothiorhodospira halophila (strain DSM 244 / SL1))).